The following is a 149-amino-acid chain: Calmodulin (149 aa).

An N-acetylalanine modification is found at A2. 4 EF-hand domains span residues 8–43 (EQIA…LGQN), 44–79 (PTEA…KMKD), 81–116 (DSEE…LGEK), and 117–149 (LTDE…MMSK). 14 residues coordinate Ca(2+): D21, D23, D25, T27, E32, D57, D59, N61, T63, E68, D94, D96, N98, and E105. N6,N6,N6-trimethyllysine is present on K116. The Ca(2+) site is built by D130, D132, D134, Q136, and E141.

The protein belongs to the calmodulin family.

In terms of biological role, calmodulin mediates the control of a large number of enzymes, ion channels and other proteins by Ca(2+). Among the enzymes to be stimulated by the calmodulin-Ca(2+) complex are a number of protein kinases and phosphatases. This Saccharina japonica (Sweet kelp) protein is Calmodulin (cam).